A 446-amino-acid chain; its full sequence is Bifunctional protein GlmU (446 aa).

Positions 1–226 (MLAIAILAAG…PFEIKGINDR (226 aa)) are pyrophosphorylase. UDP-N-acetyl-alpha-D-glucosamine contacts are provided by residues 7–10 (LAAG), lysine 21, glutamine 73, and 78–79 (GT). Position 103 (aspartate 103) interacts with Mg(2+). 4 residues coordinate UDP-N-acetyl-alpha-D-glucosamine: glycine 140, glutamate 155, asparagine 170, and asparagine 224. A Mg(2+)-binding site is contributed by asparagine 224. Positions 227–247 (VQLSECEHYIQEELKSLWMSK) are linker. The interval 248-446 (GVSFVDPISC…SKAIIRTKAD (199 aa)) is N-acetyltransferase. UDP-N-acetyl-alpha-D-glucosamine contacts are provided by arginine 329 and lysine 347. Histidine 359 serves as the catalytic Proton acceptor. The UDP-N-acetyl-alpha-D-glucosamine site is built by tyrosine 362 and asparagine 373. 3 residues coordinate acetyl-CoA: alanine 376, alanine 419, and arginine 436.

This sequence in the N-terminal section; belongs to the N-acetylglucosamine-1-phosphate uridyltransferase family. In the C-terminal section; belongs to the transferase hexapeptide repeat family. As to quaternary structure, homotrimer. It depends on Mg(2+) as a cofactor.

It localises to the cytoplasm. It carries out the reaction alpha-D-glucosamine 1-phosphate + acetyl-CoA = N-acetyl-alpha-D-glucosamine 1-phosphate + CoA + H(+). It catalyses the reaction N-acetyl-alpha-D-glucosamine 1-phosphate + UTP + H(+) = UDP-N-acetyl-alpha-D-glucosamine + diphosphate. It functions in the pathway nucleotide-sugar biosynthesis; UDP-N-acetyl-alpha-D-glucosamine biosynthesis; N-acetyl-alpha-D-glucosamine 1-phosphate from alpha-D-glucosamine 6-phosphate (route II): step 2/2. The protein operates within nucleotide-sugar biosynthesis; UDP-N-acetyl-alpha-D-glucosamine biosynthesis; UDP-N-acetyl-alpha-D-glucosamine from N-acetyl-alpha-D-glucosamine 1-phosphate: step 1/1. It participates in bacterial outer membrane biogenesis; LPS lipid A biosynthesis. Functionally, catalyzes the last two sequential reactions in the de novo biosynthetic pathway for UDP-N-acetylglucosamine (UDP-GlcNAc). The C-terminal domain catalyzes the transfer of acetyl group from acetyl coenzyme A to glucosamine-1-phosphate (GlcN-1-P) to produce N-acetylglucosamine-1-phosphate (GlcNAc-1-P), which is converted into UDP-GlcNAc by the transfer of uridine 5-monophosphate (from uridine 5-triphosphate), a reaction catalyzed by the N-terminal domain. In Prochlorococcus marinus (strain NATL2A), this protein is Bifunctional protein GlmU.